The sequence spans 219 residues: Cysteine dioxygenase (219 aa).

Fe cation contacts are provided by His-106, His-108, and His-166. Residues 113–183 (CVMKILHGSL…NDFAISLHLY (71 aa)) constitute a cross-link (3'-(S-cysteinyl)-tyrosine (Cys-Tyr)).

The protein belongs to the cysteine dioxygenase family. The cofactor is Fe cation. In terms of processing, the thioether cross-link between Cys-113 and Tyr-183 plays a structural role through stabilizing the Fe(2+) ion, and prevents the production of highly damaging free hydroxyl radicals by holding the oxygen radical via hydroxyl hydrogen.

The enzyme catalyses L-cysteine + O2 = 3-sulfino-L-alanine + H(+). Its function is as follows. Cysteine dioxygenase involved in sulfite formation from cysteine. Required for keratin degradation and plays an important role in filamentous growth and virulence. The polypeptide is Cysteine dioxygenase (Arthroderma benhamiae (Trichophyton mentagrophytes)).